The primary structure comprises 282 residues: Putative quercetin 2,3-dioxygenase VC_A0969 (282 aa).

Positions 1-21 (MTKDREIRQTVPAQPTSDGDG) are disordered. Residues H59, H61, H103, and E105 each coordinate a divalent metal cation.

Belongs to the pirin family. A divalent metal cation is required as a cofactor.

It carries out the reaction quercetin + O2 = 2-(3,4-dihydroxybenzoyloxy)-4,6-dihydroxybenzoate + CO. Its pathway is flavonoid metabolism; quercetin degradation. Its function is as follows. Putative quercetin 2,3-dioxygenase. The polypeptide is Putative quercetin 2,3-dioxygenase VC_A0969 (Vibrio cholerae serotype O1 (strain ATCC 39315 / El Tor Inaba N16961)).